The primary structure comprises 312 residues: MKLDRKDLLGLRDLSREETELILNTAIPMKDVICRDIKKVPTLRGKALVTVFYENSTRTRTSFELAGKYLSADTVNLSVSTSSVQKGESLRDTIKTIEVMGFDLMVMRHAMSGTPHYVARNTRMRVINAGDGANEHPTQALLDMYTIKEKKGTLESLKVAIVGDILHSRVARSNIYGLSKFGCDIRVVGPATLMPPGIEKLGVKSYYSLDEAINGVDVINILRIQRERQVSGLFPSLDEYAQLYMLSPQTLARAKDDVLVLHPGPINRGVEISSELADSAQALINEQVTNGVAIRMALLFLMMGGGRDEITY.

Carbamoyl phosphate is bound by residues arginine 58 and threonine 59. Lysine 86 contributes to the L-aspartate binding site. Residues arginine 108, histidine 136, and glutamine 139 each coordinate carbamoyl phosphate. 2 residues coordinate L-aspartate: arginine 169 and arginine 223. Positions 264 and 265 each coordinate carbamoyl phosphate.

This sequence belongs to the aspartate/ornithine carbamoyltransferase superfamily. ATCase family. As to quaternary structure, heterododecamer (2C3:3R2) of six catalytic PyrB chains organized as two trimers (C3), and six regulatory PyrI chains organized as three dimers (R2).

It carries out the reaction carbamoyl phosphate + L-aspartate = N-carbamoyl-L-aspartate + phosphate + H(+). Its pathway is pyrimidine metabolism; UMP biosynthesis via de novo pathway; (S)-dihydroorotate from bicarbonate: step 2/3. Its function is as follows. Catalyzes the condensation of carbamoyl phosphate and aspartate to form carbamoyl aspartate and inorganic phosphate, the committed step in the de novo pyrimidine nucleotide biosynthesis pathway. The protein is Aspartate carbamoyltransferase catalytic subunit of Syntrophomonas wolfei subsp. wolfei (strain DSM 2245B / Goettingen).